Here is a 158-residue protein sequence, read N- to C-terminus: uncharacterized protein (158 aa).

A signal peptide spans 1–19 (MQKLLLAVLFFSLLAIATA). Residues 82-158 (ANPKAEAEPG…VYENDDENEE (77 aa)) form a disordered region. Basic and acidic residues predominate over residues 84–107 (PKAEAEPGSLDKEAGTKGEKEKNG). Residues 141 to 158 (DDDDDHDDVYENDDENEE) are compositionally biased toward acidic residues.

Prismatic layer of shell (at protein level). Expressed primarily in the mantle with highest level in the mantle edge and lower level in the mantle pallium.

The protein resides in the secreted. This is an uncharacterized protein from Pinctada maxima (Silver-lipped pearl oyster).